The sequence spans 484 residues: Glutathione reductase (484 aa).

FAD is bound by residues Ser32 and Gly33. Ser32 is a binding site for glutathione. A glutathione-binding site is contributed by Arg39. Residues Glu52, Thr59, Cys60, and Lys68 each contribute to the FAD site. Cys60 and Cys65 are oxidised to a cystine. Residue Tyr122 coordinates glutathione. Ala138 provides a ligand contact to FAD. NADP(+) contacts are provided by Ala204, Ile207, Glu210, Arg227, and Arg233. Thr242 provides a ligand contact to glutathione. Gly293 serves as a coordination point for NADP(+). Asp333 serves as a coordination point for FAD. Glu339 contributes to the NADP(+) binding site. Thr341 contributes to the FAD binding site. Residue Arg349 coordinates glutathione. Val374 contacts NADP(+). Lys426 serves as a coordination point for glutathione. His473 contributes to the FAD binding site. Catalysis depends on His473, which acts as the Proton acceptor.

It belongs to the class-I pyridine nucleotide-disulfide oxidoreductase family. As to quaternary structure, homodimer. Requires FAD as cofactor.

Its subcellular location is the cytoplasm. It localises to the mitochondrion. The enzyme catalyses 2 glutathione + NADP(+) = glutathione disulfide + NADPH + H(+). Its function is as follows. Catalyzes the reduction of glutathione disulfide (GSSG) to reduced glutathione (GSH). Constitutes the major mechanism to maintain a high GSH:GSSG ratio in the cytosol. The sequence is that of Glutathione reductase (GLR1) from Kluyveromyces lactis (strain ATCC 8585 / CBS 2359 / DSM 70799 / NBRC 1267 / NRRL Y-1140 / WM37) (Yeast).